The primary structure comprises 209 residues: Large ribosomal subunit protein uL3 (209 aa).

This sequence belongs to the universal ribosomal protein uL3 family. In terms of assembly, part of the 50S ribosomal subunit. Forms a cluster with proteins L14 and L19.

Functionally, one of the primary rRNA binding proteins, it binds directly near the 3'-end of the 23S rRNA, where it nucleates assembly of the 50S subunit. The protein is Large ribosomal subunit protein uL3 of Oceanobacillus iheyensis (strain DSM 14371 / CIP 107618 / JCM 11309 / KCTC 3954 / HTE831).